Here is a 65-residue protein sequence, read N- to C-terminus: Conotoxin VnMLCL-031 (65 aa).

The signal sequence occupies residues 1-19 (MLCLPXFIILLLLASPAAP). Positions 20–43 (NPLQTRXQSNLIRAGPEDANIKTX) are excised as a propeptide. Ile-64 is modified (isoleucine amide).

It belongs to the conotoxin T superfamily. Expressed by the venom duct.

The protein resides in the secreted. This chain is Conotoxin VnMLCL-031, found in Conus ventricosus (Mediterranean cone).